Consider the following 419-residue polypeptide: Isocitrate dehydrogenase [NADP] (419 aa).

Residue Thr-102 participates in NADP(+) binding. Residues Ser-111, Asn-113, Arg-117, Arg-127, and Arg-151 each contribute to the D-threo-isocitrate site. Mg(2+) is bound at residue Asp-306. Residues 338-344, Asn-351, Tyr-390, and Arg-394 contribute to the NADP(+) site; that span reads HGSAPKY.

It belongs to the isocitrate and isopropylmalate dehydrogenases family. Homodimer. It depends on Mg(2+) as a cofactor. Mn(2+) is required as a cofactor.

It catalyses the reaction D-threo-isocitrate + NADP(+) = 2-oxoglutarate + CO2 + NADPH. In terms of biological role, catalyzes the oxidative decarboxylation of isocitrate to 2-oxoglutarate and carbon dioxide with the concomitant reduction of NADP(+). This is Isocitrate dehydrogenase [NADP] from Haloferax volcanii (strain ATCC 29605 / DSM 3757 / JCM 8879 / NBRC 14742 / NCIMB 2012 / VKM B-1768 / DS2) (Halobacterium volcanii).